The sequence spans 256 residues: Type III pantothenate kinase (256 aa).

7–14 lines the ATP pocket; it reads DIGNTNVV. Substrate is bound at residue 108-111; it reads GADC. Residue D110 is the Proton acceptor of the active site. Residue D130 participates in K(+) binding. An ATP-binding site is contributed by T133. T185 is a substrate binding site.

Belongs to the type III pantothenate kinase family. In terms of assembly, homodimer. NH4(+) serves as cofactor. K(+) is required as a cofactor.

It localises to the cytoplasm. It carries out the reaction (R)-pantothenate + ATP = (R)-4'-phosphopantothenate + ADP + H(+). The protein operates within cofactor biosynthesis; coenzyme A biosynthesis; CoA from (R)-pantothenate: step 1/5. In terms of biological role, catalyzes the phosphorylation of pantothenate (Pan), the first step in CoA biosynthesis. The sequence is that of Type III pantothenate kinase from Bifidobacterium adolescentis (strain ATCC 15703 / DSM 20083 / NCTC 11814 / E194a).